A 294-amino-acid chain; its full sequence is 4-diphosphocytidyl-2-C-methyl-D-erythritol kinase (294 aa).

Lysine 23 is an active-site residue. Residue 106 to 116 (PMGGGLGGGSS) participates in ATP binding. Aspartate 148 is an active-site residue.

Belongs to the GHMP kinase family. IspE subfamily.

The catalysed reaction is 4-CDP-2-C-methyl-D-erythritol + ATP = 4-CDP-2-C-methyl-D-erythritol 2-phosphate + ADP + H(+). The protein operates within isoprenoid biosynthesis; isopentenyl diphosphate biosynthesis via DXP pathway; isopentenyl diphosphate from 1-deoxy-D-xylulose 5-phosphate: step 3/6. In terms of biological role, catalyzes the phosphorylation of the position 2 hydroxy group of 4-diphosphocytidyl-2C-methyl-D-erythritol. This is 4-diphosphocytidyl-2-C-methyl-D-erythritol kinase from Nitrosospira multiformis (strain ATCC 25196 / NCIMB 11849 / C 71).